Consider the following 321-residue polypeptide: Transaldolase (321 aa).

K132 serves as the catalytic Schiff-base intermediate with substrate.

It belongs to the transaldolase family. Type 1 subfamily. As to quaternary structure, homodimer.

Its subcellular location is the cytoplasm. It carries out the reaction D-sedoheptulose 7-phosphate + D-glyceraldehyde 3-phosphate = D-erythrose 4-phosphate + beta-D-fructose 6-phosphate. Its pathway is carbohydrate degradation; pentose phosphate pathway; D-glyceraldehyde 3-phosphate and beta-D-fructose 6-phosphate from D-ribose 5-phosphate and D-xylulose 5-phosphate (non-oxidative stage): step 2/3. Functionally, transaldolase is important for the balance of metabolites in the pentose-phosphate pathway. The protein is Transaldolase of Rhizobium etli (strain ATCC 51251 / DSM 11541 / JCM 21823 / NBRC 15573 / CFN 42).